The following is a 420-amino-acid chain: Dihydrolipoyllysine-residue succinyltransferase component of 2-oxoglutarate dehydrogenase complex (420 aa).

Residues 3 to 78 (KINILVPDLP…ISQQTLGEIN (76 aa)) form the Lipoyl-binding domain. The residue at position 44 (lysine 44) is an N6-lipoyllysine. Residues histidine 391 and aspartate 395 contribute to the active site.

It belongs to the 2-oxoacid dehydrogenase family. As to quaternary structure, forms a 24-polypeptide structural core with octahedral symmetry. Part of the 2-oxoglutarate dehydrogenase (OGDH) complex composed of E1 (2-oxoglutarate dehydrogenase), E2 (dihydrolipoamide succinyltransferase) and E3 (dihydrolipoamide dehydrogenase); the complex contains multiple copies of the three enzymatic components (E1, E2 and E3). The cofactor is (R)-lipoate.

It carries out the reaction N(6)-[(R)-dihydrolipoyl]-L-lysyl-[protein] + succinyl-CoA = N(6)-[(R)-S(8)-succinyldihydrolipoyl]-L-lysyl-[protein] + CoA. The protein operates within amino-acid degradation; L-lysine degradation via saccharopine pathway; glutaryl-CoA from L-lysine: step 6/6. Functionally, E2 component of the 2-oxoglutarate dehydrogenase (OGDH) complex which catalyzes the second step in the conversion of 2-oxoglutarate to succinyl-CoA and CO(2). In Buchnera aphidicola subsp. Acyrthosiphon pisum (strain APS) (Acyrthosiphon pisum symbiotic bacterium), this protein is Dihydrolipoyllysine-residue succinyltransferase component of 2-oxoglutarate dehydrogenase complex (sucB).